A 254-amino-acid chain; its full sequence is Ribosomal RNA large subunit methyltransferase E (254 aa).

The tract at residues 1 to 28 (MTTPPRGPDGRPLKVRVKKSRGRTTSSQ) is disordered. The segment covering 13–22 (LKVRVKKSRG) has biased composition (basic residues). 5 residues coordinate S-adenosyl-L-methionine: Gly-80, Trp-82, Asp-103, Asp-119, and Asp-143. The active-site Proton acceptor is Lys-183. The tract at residues 231 to 254 (DRAETDDAGTDGTGTAEAQAPRDQ) is disordered.

It belongs to the class I-like SAM-binding methyltransferase superfamily. RNA methyltransferase RlmE family.

It localises to the cytoplasm. It carries out the reaction uridine(2552) in 23S rRNA + S-adenosyl-L-methionine = 2'-O-methyluridine(2552) in 23S rRNA + S-adenosyl-L-homocysteine + H(+). In terms of biological role, specifically methylates the uridine in position 2552 of 23S rRNA at the 2'-O position of the ribose in the fully assembled 50S ribosomal subunit. This is Ribosomal RNA large subunit methyltransferase E from Xanthobacter autotrophicus (strain ATCC BAA-1158 / Py2).